The chain runs to 237 residues: Ribonuclease PH (237 aa).

Phosphate is bound by residues Arg-86 and 124–126 (GTR).

This sequence belongs to the RNase PH family. Homohexameric ring arranged as a trimer of dimers.

The catalysed reaction is tRNA(n+1) + phosphate = tRNA(n) + a ribonucleoside 5'-diphosphate. Its function is as follows. Phosphorolytic 3'-5' exoribonuclease that plays an important role in tRNA 3'-end maturation. Removes nucleotide residues following the 3'-CCA terminus of tRNAs; can also add nucleotides to the ends of RNA molecules by using nucleoside diphosphates as substrates, but this may not be physiologically important. Probably plays a role in initiation of 16S rRNA degradation (leading to ribosome degradation) during starvation. In Shewanella frigidimarina (strain NCIMB 400), this protein is Ribonuclease PH.